The chain runs to 302 residues: 4-hydroxy-tetrahydrodipicolinate synthase (302 aa).

Thr55 contributes to the pyruvate binding site. The Proton donor/acceptor role is filled by Tyr144. The Schiff-base intermediate with substrate role is filled by Lys172. Val214 contacts pyruvate.

It belongs to the DapA family. Homotetramer; dimer of dimers.

The protein resides in the cytoplasm. It catalyses the reaction L-aspartate 4-semialdehyde + pyruvate = (2S,4S)-4-hydroxy-2,3,4,5-tetrahydrodipicolinate + H2O + H(+). It functions in the pathway amino-acid biosynthesis; L-lysine biosynthesis via DAP pathway; (S)-tetrahydrodipicolinate from L-aspartate: step 3/4. Functionally, catalyzes the condensation of (S)-aspartate-beta-semialdehyde [(S)-ASA] and pyruvate to 4-hydroxy-tetrahydrodipicolinate (HTPA). This Synechococcus sp. (strain CC9902) protein is 4-hydroxy-tetrahydrodipicolinate synthase.